A 224-amino-acid polypeptide reads, in one-letter code: UPF0758 protein lin1584 (224 aa).

In terms of domain architecture, MPN spans V102 to F224. H173, H175, and D186 together coordinate Zn(2+). The short motif at H173–D186 is the JAMM motif element.

Belongs to the UPF0758 family.

This Listeria innocua serovar 6a (strain ATCC BAA-680 / CLIP 11262) protein is UPF0758 protein lin1584.